The primary structure comprises 1414 residues: DNA-directed RNA polymerase subunit beta' (1414 aa).

The Zn(2+) site is built by C70, C72, C85, and C88. D460, D462, and D464 together coordinate Mg(2+). C815, C889, C896, and C899 together coordinate Zn(2+). The disordered stretch occupies residues 1395–1414 (EAEAQFADISSTPDSDTDAS).

It belongs to the RNA polymerase beta' chain family. As to quaternary structure, the RNAP catalytic core consists of 2 alpha, 1 beta, 1 beta' and 1 omega subunit. When a sigma factor is associated with the core the holoenzyme is formed, which can initiate transcription. The cofactor is Mg(2+). Zn(2+) serves as cofactor.

It carries out the reaction RNA(n) + a ribonucleoside 5'-triphosphate = RNA(n+1) + diphosphate. In terms of biological role, DNA-dependent RNA polymerase catalyzes the transcription of DNA into RNA using the four ribonucleoside triphosphates as substrates. This chain is DNA-directed RNA polymerase subunit beta', found in Herminiimonas arsenicoxydans.